We begin with the raw amino-acid sequence, 116 residues long: Large ribosomal subunit protein bL19 (116 aa).

It belongs to the bacterial ribosomal protein bL19 family.

Its function is as follows. This protein is located at the 30S-50S ribosomal subunit interface and may play a role in the structure and function of the aminoacyl-tRNA binding site. This chain is Large ribosomal subunit protein bL19, found in Staphylococcus carnosus (strain TM300).